The following is a 115-amino-acid chain: NADH-ubiquinone oxidoreductase chain 3 (115 aa).

Transmembrane regions (helical) follow at residues 3–23, 55–75, and 86–106; these read LALA…ITFW, FFLV…LLPL, and LTIA…AYEW.

The protein belongs to the complex I subunit 3 family. Core subunit of respiratory chain NADH dehydrogenase (Complex I) which is composed of 45 different subunits. Interacts with TMEM186. Interacts with TMEM242.

The protein localises to the mitochondrion inner membrane. It catalyses the reaction a ubiquinone + NADH + 5 H(+)(in) = a ubiquinol + NAD(+) + 4 H(+)(out). Functionally, core subunit of the mitochondrial membrane respiratory chain NADH dehydrogenase (Complex I) which catalyzes electron transfer from NADH through the respiratory chain, using ubiquinone as an electron acceptor. Essential for the catalytic activity of complex I. The protein is NADH-ubiquinone oxidoreductase chain 3 of Hylobates lar (Lar gibbon).